Here is a 305-residue protein sequence, read N- to C-terminus: Translation initiation factor eIF2B subunit alpha (305 aa).

K35 bears the N6-acetyllysine mark.

It belongs to the eIF-2B alpha/beta/delta subunits family. As to quaternary structure, component of the translation initiation factor 2B (eIF2B) complex which is a heterodecamer of two sets of five different subunits: alpha, beta, gamma, delta and epsilon. Subunits alpha, beta and delta comprise a regulatory subcomplex and subunits epsilon and gamma comprise a catalytic subcomplex. Within the complex, the hexameric regulatory complex resides at the center, with the two heterodimeric catalytic subcomplexes bound on opposite sides.

It is found in the cytoplasm. The protein localises to the cytosol. With respect to regulation, activated by the chemical integrated stress response (ISR) inhibitor ISRIB which stimulates guanine nucleotide exchange factor activity for both phosphorylated and unphosphorylated eIF2. Its function is as follows. Acts as a component of the translation initiation factor 2B (eIF2B) complex, which catalyzes the exchange of GDP for GTP on eukaryotic initiation factor 2 (eIF2) gamma subunit. Its guanine nucleotide exchange factor activity is repressed when bound to eIF2 complex phosphorylated on the alpha subunit, thereby limiting the amount of methionyl-initiator methionine tRNA available to the ribosome and consequently global translation is repressed. The protein is Translation initiation factor eIF2B subunit alpha (EIF2B1) of Pongo abelii (Sumatran orangutan).